The primary structure comprises 386 residues: Methionine aminopeptidase 1 (386 aa).

Ala-2 carries the N-acetylalanine modification. Residues 6–59 form a C6H2-type zinc finger; the sequence is TRVCETDGCSSEAKLQCPTCIKLGIQGSYFCSQECFKGSWATHKLLHKKAKDEK. Zn(2+) contacts are provided by Cys-9, Cys-14, Cys-22, Cys-25, Cys-36, Cys-40, His-48, and His-52. An a protein-binding site is contributed by His-203. The Zn(2+) site is built by Asp-220, Asp-231, and His-294. His-301 is a binding site for a protein. Residues Glu-327 and Glu-358 each coordinate Zn(2+).

This sequence belongs to the peptidase M24A family. Methionine aminopeptidase type 1 subfamily. In terms of assembly, associates with the 60S ribosomal subunit of the 80S translational complex. Requires Zn(2+) as cofactor. Co(2+) serves as cofactor. Mn(2+) is required as a cofactor. The cofactor is Fe(2+).

It is found in the cytoplasm. The catalysed reaction is Release of N-terminal amino acids, preferentially methionine, from peptides and arylamides.. Functionally, cotranslationally removes the N-terminal methionine from nascent proteins. The N-terminal methionine is often cleaved when the second residue in the primary sequence is small and uncharged (Met-Ala-, Cys, Gly, Pro, Ser, Thr, or Val). The chain is Methionine aminopeptidase 1 (METAP1) from Pongo abelii (Sumatran orangutan).